The chain runs to 366 residues: Cobalt-precorrin-5B C(1)-methyltransferase (366 aa).

This sequence belongs to the CbiD family.

The enzyme catalyses Co-precorrin-5B + S-adenosyl-L-methionine = Co-precorrin-6A + S-adenosyl-L-homocysteine. It functions in the pathway cofactor biosynthesis; adenosylcobalamin biosynthesis; cob(II)yrinate a,c-diamide from sirohydrochlorin (anaerobic route): step 6/10. Functionally, catalyzes the methylation of C-1 in cobalt-precorrin-5B to form cobalt-precorrin-6A. The polypeptide is Cobalt-precorrin-5B C(1)-methyltransferase (Pseudomonas paraeruginosa (strain DSM 24068 / PA7) (Pseudomonas aeruginosa (strain PA7))).